We begin with the raw amino-acid sequence, 86 residues long: MKTLLLTLVVVTIVYLDLGYTTKCYNHQSTTPETTEICPDSGYFCYKSSWIDGREGRIERGCTFTCPELTPNGKYVYCCRRDKCNQ.

Residues 1-21 (MKTLLLTLVVVTIVYLDLGYT) form the signal peptide. Intrachain disulfides connect Cys-24–Cys-45, Cys-38–Cys-62, Cys-66–Cys-78, and Cys-79–Cys-84.

This sequence belongs to the three-finger toxin family. Short-chain subfamily. Orphan group VIII (haditoxin) sub-subfamily. As to quaternary structure, homodimer; non-covalently linked. Expressed by the venom gland.

It is found in the secreted. Its function is as follows. Antagonist of muscle (alpha-1-beta-1-delta-epsilon/CHRNA1-CHRNB1-CHRND-CHRNE) and neuronal (alpha-7/CHRNA7, alpha-3-beta-2/CHRNA3-CHRNB2, alpha-4-beta-2/CHRNA4-CHRNB2) nicotinic acetylcholine receptors (nAChR). The highest affinity is for human alpha-7/CHRNA7 nAChRs (IC(50)=180 nM), compared to human alpha-1-beta-1-delta-epsilon/CHRNA1-CHRNB1-CHRND-CHRNE nAChR (IC(50)= 550 nM), alpha-3-beta-2/CHRNA3-CHRNB2 nAChR (IC(50)=500 nM), and alpha-4-beta-2/CHRNA4-CHRNB2 nAChR (IC(50)=2.6 uM). This chain is Haditoxin, found in Ophiophagus hannah (King cobra).